Here is a 178-residue protein sequence, read N- to C-terminus: Caveolin-1 (178 aa).

Residue serine 2 is modified to N-acetylserine. Serine 2 is subject to Phosphoserine. The interval 2–94 (SGGKYVDSEG…WKASFTTFTV (93 aa)) is required for homooligomerization. The Cytoplasmic portion of the chain corresponds to 2–104 (SGGKYVDSEG…TKYWFYRLLS (103 aa)). At lysine 5 the chain carries N6-acetyllysine; alternate. A Glycyl lysine isopeptide (Lys-Gly) (interchain with G-Cter in ubiquitin); alternate cross-link involves residue lysine 5. A Phosphotyrosine modification is found at tyrosine 6. Phosphoserine is present on serine 9. Tyrosine 14 carries the post-translational modification Phosphotyrosine; by ABL1. Tyrosine 25 carries the post-translational modification Phosphotyrosine. Residues lysine 26, lysine 30, lysine 39, lysine 47, and lysine 57 each participate in a glycyl lysine isopeptide (Lys-Gly) (interchain with G-Cter in ubiquitin) cross-link. Residues 82–94 (DGIWKASFTTFTV) are interaction with CAVIN3. The helical intramembrane region spans 105-125 (GIFGIPMALIWGVYFAILSFL). At 126–178 (HIWAVVPCIKSFLIEIQCISRVYSIYVHTFCDPLFEAIGKIFSNIRISTQKEI) the chain is on the cytoplasmic side. The tract at residues 131 to 142 (VPCIKSFLIEIQ) is interacts with SPRY1, SPRY2, SPRY3 and SPRY4. Residues cysteine 133, cysteine 143, and cysteine 156 are each lipidated (S-palmitoyl cysteine). Residues 149 to 160 (SIYVHTFCDPLF) are interacts with SPRY1, SPRY2, and SPRY4. Positions 167–178 (FSNIRISTQKEI) are interacts with SPRY1, SPRY2, SPRY3 and SPRY4.

The protein belongs to the caveolin family. Homooligomer. Interacts with GLIPR2. Interacts with NOSTRIN. Interacts with SNAP25 and STX1A. Interacts (via the N-terminus) with DPP4; the interaction is direct. Interacts with CTNNB1, CDH1 and JUP. Interacts with PACSIN2; this interaction induces membrane tubulation. Interacts with SLC7A9. Interacts with BMX and BTK. Interacts with TGFBR1. Interacts with CAVIN3 (via leucine-zipper domain) in a cholesterol-sensitive manner. Interacts with CAVIN1. Interacts with EHD2 in a cholesterol-dependent manner. Forms a ternary complex with UBXN6 and VCP; mediates CAV1 targeting to lysosomes for degradation. Interacts with ABCG1; this interaction regulates ABCG1-mediated cholesterol efflux. Interacts with NEU3; this interaction enhances NEU3 sialidase activity within caveola. Interacts (via C-terminus) with SPRY1, SPRY2 (via C-terminus), SPRY3, and SPRY4. Interacts with IGFBP5; this interaction allows trafficking of IGFBP5 from the plasma membrane to the nucleus. In terms of processing, phosphorylated at Tyr-14 by ABL1 in response to oxidative stress. Ubiquitinated. Undergo monoubiquitination and multi- and/or polyubiquitination. Monoubiquitination of N-terminal lysines promotes integration in a ternary complex with UBXN6 and VCP which promotes oligomeric CAV1 targeting to lysosomes for degradation. Ubiquitinated by ZNRF1; leading to degradation and modulation of the TLR4-mediated immune response.

The protein resides in the golgi apparatus membrane. Its subcellular location is the cell membrane. The protein localises to the membrane. It localises to the caveola. It is found in the membrane raft. May act as a scaffolding protein within caveolar membranes. Forms a stable heterooligomeric complex with CAV2 that targets to lipid rafts and drives caveolae formation. Mediates the recruitment of CAVIN proteins (CAVIN1/2/3/4) to the caveolae. Interacts directly with G-protein alpha subunits and can functionally regulate their activity. Involved in the costimulatory signal essential for T-cell receptor (TCR)-mediated T-cell activation. Its binding to DPP4 induces T-cell proliferation and NF-kappa-B activation in a T-cell receptor/CD3-dependent manner. Recruits CTNNB1 to caveolar membranes and may regulate CTNNB1-mediated signaling through the Wnt pathway. Negatively regulates TGFB1-mediated activation of SMAD2/3 by mediating the internalization of TGFBR1 from membrane rafts leading to its subsequent degradation. Binds 20(S)-hydroxycholesterol (20(S)-OHC). This chain is Caveolin-1 (CAV1), found in Echinops telfairi (Lesser hedgehog tenrec).